The following is a 164-amino-acid chain: MDKNALRKQILQKRMALSTIEKSHLDQKINQKLVAFLTPKPCIKTIALYEPIKNEVTFVDFFFEFLKINQIRAVYPKVISDTEIIFIDQETNTFEPNQIDCFLIPLVGFNKDNYRLGFGKGYYDRYLMQLTRQQPKIGIAYSFQKGDFLADPWDVQLDLIINDE.

3–7 (KNALR) serves as a coordination point for ATP. Glu-50 and Glu-55 together coordinate substrate. An ATP-binding site is contributed by 115–123 (RLGFGKGYY). Mg(2+) is bound at residue Asp-124. Residues Arg-125 and Trp-153 each coordinate ATP. Asp-154 contributes to the Mg(2+) binding site.

Belongs to the 5-formyltetrahydrofolate cyclo-ligase family. As to quaternary structure, monomer or homodimer. The cofactor is Mg(2+). Mn(2+) serves as cofactor. Ca(2+) is required as a cofactor. It depends on Zn(2+) as a cofactor. Requires Fe(2+) as cofactor. The cofactor is Co(2+). Cu(2+) serves as cofactor.

The protein localises to the cytoplasm. It catalyses the reaction (6S)-5-formyl-5,6,7,8-tetrahydrofolate + ATP = (6R)-5,10-methenyltetrahydrofolate + ADP + phosphate. Functionally, involved in folate metabolism. Catalyzes the irreversible conversion of 5-formyltetrahydrofolate (5-FTHF) to yield 5,10-methenyltetrahydrofolate. This is 5-formyltetrahydrofolate cyclo-ligase from Mycoplasma pneumoniae (strain ATCC 29342 / M129 / Subtype 1) (Mycoplasmoides pneumoniae).